Here is a 297-residue protein sequence, read N- to C-terminus: Small ribosomal subunit protein uS2 (297 aa).

Residues 266 to 297 are disordered; the sequence is GASWDAAEPSDWAATPAAAGQEWAASGATEQW. Positions 282-297 are enriched in low complexity; it reads AAAGQEWAASGATEQW.

It belongs to the universal ribosomal protein uS2 family. As to quaternary structure, component of the small ribosomal subunit. Mature ribosomes consist of a small (40S) and a large (60S) subunit. The 40S subunit contains about 33 different proteins and 1 molecule of RNA (18S). The 60S subunit contains about 49 different proteins and 3 molecules of RNA (25S, 5.8S and 5S). Interacts with rps21.

The protein localises to the cytoplasm. In terms of biological role, required for the assembly and/or stability of the 40S ribosomal subunit. Required for the processing of the 20S rRNA-precursor to mature 18S rRNA in a late step of the maturation of 40S ribosomal subunits. The polypeptide is Small ribosomal subunit protein uS2 (rps0) (Sclerotinia sclerotiorum (strain ATCC 18683 / 1980 / Ss-1) (White mold)).